Reading from the N-terminus, the 127-residue chain is Anti-adapter protein IraD (127 aa).

The protein belongs to the GpW/Gp25 family. IraD subfamily. Interacts with RssB.

The protein resides in the cytoplasm. Inhibits RpoS proteolysis by regulating RssB activity, thereby increasing the stability of the sigma stress factor RpoS during oxidative stress. Its effect on RpoS stability is due to its interaction with RssB, which probably blocks the interaction of RssB with RpoS, and the consequent delivery of the RssB-RpoS complex to the ClpXP protein degradation pathway. The chain is Anti-adapter protein IraD from Escherichia coli O6:K15:H31 (strain 536 / UPEC).